The sequence spans 425 residues: Serine hydroxymethyltransferase (425 aa).

(6S)-5,6,7,8-tetrahydrofolate is bound by residues leucine 122 and 126-128 (GHL). Lysine 231 is subject to N6-(pyridoxal phosphate)lysine. 355–357 (SPF) is a binding site for (6S)-5,6,7,8-tetrahydrofolate.

The protein belongs to the SHMT family. Homodimer. The cofactor is pyridoxal 5'-phosphate.

The protein localises to the cytoplasm. The enzyme catalyses (6R)-5,10-methylene-5,6,7,8-tetrahydrofolate + glycine + H2O = (6S)-5,6,7,8-tetrahydrofolate + L-serine. The protein operates within one-carbon metabolism; tetrahydrofolate interconversion. It functions in the pathway amino-acid biosynthesis; glycine biosynthesis; glycine from L-serine: step 1/1. In terms of biological role, catalyzes the reversible interconversion of serine and glycine with tetrahydrofolate (THF) serving as the one-carbon carrier. This reaction serves as the major source of one-carbon groups required for the biosynthesis of purines, thymidylate, methionine, and other important biomolecules. Also exhibits THF-independent aldolase activity toward beta-hydroxyamino acids, producing glycine and aldehydes, via a retro-aldol mechanism. The polypeptide is Serine hydroxymethyltransferase (Rippkaea orientalis (strain PCC 8801 / RF-1) (Cyanothece sp. (strain PCC 8801))).